The sequence spans 357 residues: MARTPTRLLIAASGTGGHLFPALALAERLPDYEIEWLGVPDRLEQSLVPKTYPLHTIPIEGFQTRLGLKTLKILFSQLRAIWQVRSLIKKRQIAAVFTTGGYIAGPTILAARLANIPVILHESNYIPGKVTKVLGRWCDTVALGFQGTASYLPGTRTTWVSTPVREQFLIPQSLDLPIPETAFLIVVAGGSQGAVALNQLVRQSAPQWLEKGIYIVHLTGENDPEADSLRHSNYFSQPFYDNMAGLWQRANLAISRSGASTLTELAITCTPSILIPYPFAAEDHQFYNAQVFAEAQAAYLYRQNELTAQFLSELVLDLWSNPEKLAAMAQQASHLAISDSADLLADLLRRKSQKDSF.

Residues 15-17, Asn-124, Arg-165, Ser-191, and Gln-285 contribute to the UDP-N-acetyl-alpha-D-glucosamine site; that span reads TGG.

It belongs to the glycosyltransferase 28 family. MurG subfamily.

The protein resides in the cell inner membrane. The enzyme catalyses di-trans,octa-cis-undecaprenyl diphospho-N-acetyl-alpha-D-muramoyl-L-alanyl-D-glutamyl-meso-2,6-diaminopimeloyl-D-alanyl-D-alanine + UDP-N-acetyl-alpha-D-glucosamine = di-trans,octa-cis-undecaprenyl diphospho-[N-acetyl-alpha-D-glucosaminyl-(1-&gt;4)]-N-acetyl-alpha-D-muramoyl-L-alanyl-D-glutamyl-meso-2,6-diaminopimeloyl-D-alanyl-D-alanine + UDP + H(+). The protein operates within cell wall biogenesis; peptidoglycan biosynthesis. Its function is as follows. Cell wall formation. Catalyzes the transfer of a GlcNAc subunit on undecaprenyl-pyrophosphoryl-MurNAc-pentapeptide (lipid intermediate I) to form undecaprenyl-pyrophosphoryl-MurNAc-(pentapeptide)GlcNAc (lipid intermediate II). The polypeptide is UDP-N-acetylglucosamine--N-acetylmuramyl-(pentapeptide) pyrophosphoryl-undecaprenol N-acetylglucosamine transferase (Microcystis aeruginosa (strain NIES-843 / IAM M-2473)).